The primary structure comprises 100 residues: Urease subunit gamma (100 aa).

This sequence belongs to the urease gamma subunit family. Heterotrimer of UreA (gamma), UreB (beta) and UreC (alpha) subunits. Three heterotrimers associate to form the active enzyme.

The protein localises to the cytoplasm. The catalysed reaction is urea + 2 H2O + H(+) = hydrogencarbonate + 2 NH4(+). It participates in nitrogen metabolism; urea degradation; CO(2) and NH(3) from urea (urease route): step 1/1. This Pseudomonas syringae pv. syringae (strain B728a) protein is Urease subunit gamma.